A 1876-amino-acid chain; its full sequence is Phenolphthiocerol/phthiocerol polyketide synthase subunit A (1876 aa).

Thr2 bears the N-acetylthreonine mark. One can recognise a Carrier 1 domain in the interval 9–83; sequence ADLRHWLIDY…ALAAYLAAPE (75 aa). Ser43 bears the O-(pantetheine 4'-phosphoryl)serine mark. Residues 101-526 form the Ketosynthase family 3 (KS3) domain; the sequence is DEPIAVVGMG…GTNAHVVIEQ (426 aa). Catalysis depends on for beta-ketoacyl synthase activity residues Cys273, His408, and His448. The interval 626 to 950 is acyltransferase; sequence SPGPGTVFVY…NLNKAHTIHP (325 aa). Ser720 serves as the catalytic For malonyltransferase activity. Residues 997-1112 are N-terminal hotdog fold; sequence HTTVATVSAS…AQLSSSPSDS (116 aa). In terms of domain architecture, PKS/mFAS DH spans 997 to 1267; it reads HTTVATVSAS…YRALDFGLDV (271 aa). His1027 (proton acceptor; for dehydratase activity) is an active-site residue. The interval 1102–1130 is disordered; sequence TAQLSSSPSDSASSLNEHHRANGQPPERA. Residues 1106–1115 show a composition bias toward low complexity; that stretch reads SSSPSDSASS. Positions 1130 to 1267 are C-terminal hotdog fold; sequence AHRDLIPDLA…YRALDFGLDV (138 aa). Asp1186 serves as the catalytic Proton donor; for dehydratase activity. 1491 to 1551 is an NADP(+) binding site; sequence AAYLITGGLG…RRRIDAIRAL (61 aa). Residues 1491 to 1728 are beta-ketoacyl reductase; sequence AAYLITGGLG…DGYDVAQAVV (238 aa). Residues 1759 to 1836 form the Carrier 2 domain; the sequence is EVRSELEQGL…SLASYLAKRV (78 aa). At Ser1796 the chain carries O-(pantetheine 4'-phosphoryl)serine.

The cofactor is NADP(+). Requires pantetheine 4'-phosphate as cofactor.

The catalysed reaction is icosanoyl-[(phenol)carboxyphthiodiolenone synthase] + 2 (S)-methylmalonyl-CoA + 3 malonyl-CoA + 5 NADPH + 10 H(+) = C32-carboxyphthiodiolenone-[(phenol)carboxyphthiodiolenone synthase] + 5 CO2 + 5 NADP(+) + 5 CoA + 2 H2O. It carries out the reaction docosanoyl-[(phenol)carboxyphthiodiolenone synthase] + 2 (S)-methylmalonyl-CoA + 3 malonyl-CoA + 5 NADPH + 10 H(+) = C34-carboxyphthiodiolenone-[(phenol)carboxyphthiodiolenone synthase] + 5 CO2 + 5 NADP(+) + 5 CoA + 2 H2O. It catalyses the reaction 17-(4-hydroxyphenyl)heptadecanoyl-[(phenol)carboxyphthiodiolenone synthase] + 2 (S)-methylmalonyl-CoA + 3 malonyl-CoA + 5 NADPH + 10 H(+) = C35-(phenol)carboxyphthiodiolenone-[(phenol)carboxyphthiodiolenone synthase] + 5 CO2 + 5 NADP(+) + 5 CoA + 2 H2O. The enzyme catalyses 19-(4-hydroxyphenyl)nonadecanoyl-[(phenol)carboxyphthiodiolenone synthase] + 2 (S)-methylmalonyl-CoA + 3 malonyl-CoA + 5 NADPH + 10 H(+) = C37-(phenol)carboxyphthiodiolenone-[(phenol)carboxyphthiodiolenone synthase] + 5 CO2 + 5 NADP(+) + 5 CoA + 2 H2O. Its pathway is lipid metabolism; fatty acid biosynthesis. Part of the PpsABCDE complex involved in the biosynthesis of the lipid core common to phthiocerols and phenolphthiocerols by successive additions of malonyl-CoA or methylmalonyl-CoA extender units. PpsA can accept as substrate the activated forms of either icosanoyl (C20), docosanoyl (C22) or lignoceroyl (C24) groups from FadD26, or a (4-hydroxyphenyl)-C17 or (4-hydroxyphenyl)-C19 fatty acyl from FadD29. PpsA initiates the biosynthesis and extends its substrate using a malonyl-CoA extender unit. The PpsB and PpsC proteins add the second and third malonyl-CoA extender units. PpsD adds an (R)-methylmalonyl unit and PpsE adds a second (R)-methylmalonyl unit. The incorporation of the methylmalonyl units results in formation of two branched methyl groups in the elongated product. This chain is Phenolphthiocerol/phthiocerol polyketide synthase subunit A (ppsA), found in Mycobacterium tuberculosis (strain ATCC 25618 / H37Rv).